We begin with the raw amino-acid sequence, 137 residues long: Small ribosomal subunit protein bS6 (137 aa).

The interval 96–137 is disordered; it reads VTEQSIMLKQKEERAERAPRRDDREERAPRREEEAKPEAAAE. A compositionally biased stretch (basic and acidic residues) spans 104–137; the sequence is KQKEERAERAPRRDDREERAPRREEEAKPEAAAE.

This sequence belongs to the bacterial ribosomal protein bS6 family.

Binds together with bS18 to 16S ribosomal RNA. The protein is Small ribosomal subunit protein bS6 of Vibrio atlanticus (strain LGP32) (Vibrio splendidus (strain Mel32)).